Here is a 318-residue protein sequence, read N- to C-terminus: Ribose-phosphate pyrophosphokinase (318 aa).

ATP contacts are provided by residues aspartate 43–glutamate 45 and arginine 102–glutamine 103. 2 residues coordinate Mg(2+): histidine 136 and aspartate 176. Lysine 199 is an active-site residue. D-ribose 5-phosphate is bound by residues arginine 201, aspartate 225, and aspartate 229 to threonine 233.

It belongs to the ribose-phosphate pyrophosphokinase family. Class I subfamily. As to quaternary structure, homohexamer. It depends on Mg(2+) as a cofactor.

The protein resides in the cytoplasm. It carries out the reaction D-ribose 5-phosphate + ATP = 5-phospho-alpha-D-ribose 1-diphosphate + AMP + H(+). It functions in the pathway metabolic intermediate biosynthesis; 5-phospho-alpha-D-ribose 1-diphosphate biosynthesis; 5-phospho-alpha-D-ribose 1-diphosphate from D-ribose 5-phosphate (route I): step 1/1. Its function is as follows. Involved in the biosynthesis of the central metabolite phospho-alpha-D-ribosyl-1-pyrophosphate (PRPP) via the transfer of pyrophosphoryl group from ATP to 1-hydroxyl of ribose-5-phosphate (Rib-5-P). In Listeria ivanovii, this protein is Ribose-phosphate pyrophosphokinase.